We begin with the raw amino-acid sequence, 657 residues long: Heat shock protein hsp-6 (657 aa).

Residues 1–27 constitute a mitochondrion transit peptide; that stretch reads MLSARSFLSSARTIARSSLMSARSLSD. A disordered region spans residues 637–657; it reads KNSGGDAQEAKTAEEPKKEQN. The span at 644–657 shows a compositional bias: basic and acidic residues; sequence QEAKTAEEPKKEQN.

Belongs to the heat shock protein 70 family.

Its subcellular location is the mitochondrion. The polypeptide is Heat shock protein hsp-6 (Caenorhabditis elegans).